Here is a 1080-residue protein sequence, read N- to C-terminus: ATP-dependent helicase/deoxyribonuclease subunit B (1080 aa).

It belongs to the helicase family. AddB/RexB type 2 subfamily. As to quaternary structure, heterodimer of AddA and RexB. The cofactor is Mg(2+).

Its function is as follows. The heterodimer acts as both an ATP-dependent DNA helicase and an ATP-dependent, dual-direction single-stranded exonuclease. Recognizes the chi site generating a DNA molecule suitable for the initiation of homologous recombination. This subunit has 5' -&gt; 3' nuclease activity but not helicase activity. This Streptococcus mutans serotype c (strain ATCC 700610 / UA159) protein is ATP-dependent helicase/deoxyribonuclease subunit B.